A 643-amino-acid polypeptide reads, in one-letter code: Phosphomethylpyrimidine synthase (643 aa).

Substrate-binding positions include asparagine 248, methionine 277, tyrosine 306, histidine 342, 362 to 364 (SRG), 403 to 406 (DGLR), and glutamate 442. Position 446 (histidine 446) interacts with Zn(2+). Tyrosine 469 is a binding site for substrate. Residue histidine 510 participates in Zn(2+) binding. 3 residues coordinate [4Fe-4S] cluster: cysteine 590, cysteine 593, and cysteine 598.

Belongs to the ThiC family. In terms of assembly, homodimer. The cofactor is [4Fe-4S] cluster.

It carries out the reaction 5-amino-1-(5-phospho-beta-D-ribosyl)imidazole + S-adenosyl-L-methionine = 4-amino-2-methyl-5-(phosphooxymethyl)pyrimidine + CO + 5'-deoxyadenosine + formate + L-methionine + 3 H(+). It participates in cofactor biosynthesis; thiamine diphosphate biosynthesis. Catalyzes the synthesis of the hydroxymethylpyrimidine phosphate (HMP-P) moiety of thiamine from aminoimidazole ribotide (AIR) in a radical S-adenosyl-L-methionine (SAM)-dependent reaction. The sequence is that of Phosphomethylpyrimidine synthase from Burkholderia orbicola (strain MC0-3).